Reading from the N-terminus, the 309-residue chain is MEMSLRLASSSTSNPICLLNPGKNLNFPIRNHRIPKTSKPFCVRSSMSLSKPPRQTLSSNWDVSSFSIDSVAQSPSRLPSFEELDTTNMLLRQRIVFLGSQVDDMTADLVISQLLLLDAEDSERDITLFINSPGGSITAGMGIYDAMKQCKADVSTVCLGLAASMGAFLLASGSKGKRYCMPNSKVMIHQPLGTAGGKATEMSIRIREMMYHKIKLNKIFSRITGKPESEIESDTDRDNFLNPWEAKEYGLIDAVIDDGKPGLIAPIGDGTPPPKTKVWDLWKVEGTKKDNTNLPSERSMTQNGYAAIE.

The transit peptide at 1-70 (MEMSLRLASS…WDVSSFSIDS (70 aa)) directs the protein to the chloroplast. V71 carries the N-acetylvaline modification. The active-site Nucleophile is S164. Residue H189 is part of the active site. Residue T194 is modified to Phosphothreonine. The tract at residues 290–309 (DNTNLPSERSMTQNGYAAIE) is disordered. Polar residues predominate over residues 292 to 309 (TNLPSERSMTQNGYAAIE).

Belongs to the peptidase S14 family. Component of the chloroplastic Clp protease core complex which consist of at least 16 proteins: CLPP4 (3 copies), CLPP5 (3 copies), CLPR4 (2 copies), ClpP1 (1 copy), CLPP6 (1 copy), CLPR2 (1 copy), CLPT1 (1 copy), CLPT2 (1 copy) and 3 copies of CLPP3 and/or CLPR1 and/or CLPR3. The core complex is organized in two heptameric rings, one containing CLPP3,4,5,6 in a 1:2:3:1 ratio and the other CLPP1 and CLPR1,2,3,4 in a 3:1:1:1:1 ratio. Interacts with CHIP. In terms of processing, ubiquitinated in vitro by CHIP. Mostly expressed in leaves. Also detected in stems, and to a lower extent, in roots (at protein level).

The protein localises to the plastid. It is found in the chloroplast stroma. The catalysed reaction is Hydrolysis of proteins to small peptides in the presence of ATP and magnesium. alpha-casein is the usual test substrate. In the absence of ATP, only oligopeptides shorter than five residues are hydrolyzed (such as succinyl-Leu-Tyr-|-NHMec, and Leu-Tyr-Leu-|-Tyr-Trp, in which cleavage of the -Tyr-|-Leu- and -Tyr-|-Trp bonds also occurs).. Functionally, cleaves peptides in various proteins in a process that requires ATP hydrolysis. Has a chymotrypsin-like activity. Plays a major role in the degradation of misfolded proteins. In the absence of CLPP3, modified ClpPR core(s) could be formed, albeit at strongly reduced levels. The sequence is that of ATP-dependent Clp protease proteolytic subunit 3, chloroplastic from Arabidopsis thaliana (Mouse-ear cress).